The following is a 118-amino-acid chain: DNA-binding protein inhibitor ID-3-B (118 aa).

One can recognise a bHLH domain in the interval 32 to 84; the sequence is SLKGAGIDETMGLLYDMNGCYSKLKELVPGIPQGSKLSQVEILQHVIDYIFDL.

Homodimer. Heterodimer with other HLH proteins. Interacts (via HLH domain) with the bHLH protein hes4/hairy2 (via Orange domain). Interacts with stat3.

Its subcellular location is the nucleus. In terms of biological role, transcriptional regulator (lacking a basic DNA binding domain) which negatively regulates the basic helix-loop-helix (bHLH) transcription factors by forming heterodimers and inhibiting their DNA binding and transcriptional activity. Influences cell fate decisions in the embryo by sequestering and blocking the activity of the bHLH transcription factors that control these decisions. Inhibits the binding of myogenic bHLH-containing complexes to E-box DNA, thereby preventing activation of muscle-specific target genes. Also inhibits the activity of neurogenic factor neurod1/neuroD. Plays a role in cell cycle progression and survival of neural crest progenitors; binding to either hes4-B/hairy2b or stat3 blocks the formation of transcription factor complexes and the repressor function of hes4-B/hairy2B, to allow neural crest progenitors to differentiate. May play a role in the regulation of the circadian rhythm. The chain is DNA-binding protein inhibitor ID-3-B (id3-b) from Xenopus laevis (African clawed frog).